Reading from the N-terminus, the 105-residue chain is Heat shock protein HspQ (105 aa).

It belongs to the HspQ family.

The protein localises to the cytoplasm. In terms of biological role, involved in the degradation of certain denaturated proteins, including DnaA, during heat shock stress. The chain is Heat shock protein HspQ from Yersinia enterocolitica serotype O:8 / biotype 1B (strain NCTC 13174 / 8081).